We begin with the raw amino-acid sequence, 283 residues long: Urease accessory protein UreD (283 aa).

The protein belongs to the UreD family. UreD, UreF and UreG form a complex that acts as a GTP-hydrolysis-dependent molecular chaperone, activating the urease apoprotein by helping to assemble the nickel containing metallocenter of UreC. The UreE protein probably delivers the nickel.

The protein localises to the cytoplasm. Required for maturation of urease via the functional incorporation of the urease nickel metallocenter. The polypeptide is Urease accessory protein UreD (Rhodopseudomonas palustris (strain BisB5)).